The following is a 149-amino-acid chain: Ribosome-binding factor A (149 aa).

Positions 124-149 (AKLREGAVPAGDADPYKTSSKSESEE) are disordered.

The protein belongs to the RbfA family. As to quaternary structure, monomer. Binds 30S ribosomal subunits, but not 50S ribosomal subunits or 70S ribosomes.

The protein localises to the cytoplasm. In terms of biological role, one of several proteins that assist in the late maturation steps of the functional core of the 30S ribosomal subunit. Associates with free 30S ribosomal subunits (but not with 30S subunits that are part of 70S ribosomes or polysomes). Required for efficient processing of 16S rRNA. May interact with the 5'-terminal helix region of 16S rRNA. The chain is Ribosome-binding factor A from Corynebacterium glutamicum (strain R).